The primary structure comprises 564 residues: Proline--tRNA ligase (564 aa).

Belongs to the class-II aminoacyl-tRNA synthetase family. ProS type 1 subfamily. As to quaternary structure, homodimer.

The protein resides in the cytoplasm. The enzyme catalyses tRNA(Pro) + L-proline + ATP = L-prolyl-tRNA(Pro) + AMP + diphosphate. Its function is as follows. Catalyzes the attachment of proline to tRNA(Pro) in a two-step reaction: proline is first activated by ATP to form Pro-AMP and then transferred to the acceptor end of tRNA(Pro). As ProRS can inadvertently accommodate and process non-cognate amino acids such as alanine and cysteine, to avoid such errors it has two additional distinct editing activities against alanine. One activity is designated as 'pretransfer' editing and involves the tRNA(Pro)-independent hydrolysis of activated Ala-AMP. The other activity is designated 'posttransfer' editing and involves deacylation of mischarged Ala-tRNA(Pro). The misacylated Cys-tRNA(Pro) is not edited by ProRS. The chain is Proline--tRNA ligase from Bacillus velezensis (strain DSM 23117 / BGSC 10A6 / LMG 26770 / FZB42) (Bacillus amyloliquefaciens subsp. plantarum).